The following is a 570-amino-acid chain: Urease subunit alpha (570 aa).

Residues 131–570 form the Urease domain; sequence GGFDSHIHFI…LPLAQRYFMF (440 aa). The Ni(2+) site is built by His136, His138, and Lys219. Residue Lys219 is modified to N6-carboxylysine. His221 lines the substrate pocket. Ni(2+) contacts are provided by His248 and His274. The active-site Proton donor is the His322. Asp362 lines the Ni(2+) pocket.

This sequence belongs to the metallo-dependent hydrolases superfamily. Urease alpha subunit family. Heterotrimer of UreA (gamma), UreB (beta) and UreC (alpha) subunits. Three heterotrimers associate to form the active enzyme. It depends on Ni cation as a cofactor. In terms of processing, carboxylation allows a single lysine to coordinate two nickel ions.

It localises to the cytoplasm. The enzyme catalyses urea + 2 H2O + H(+) = hydrogencarbonate + 2 NH4(+). Its pathway is nitrogen metabolism; urea degradation; CO(2) and NH(3) from urea (urease route): step 1/1. The protein is Urease subunit alpha of Rhodopseudomonas palustris (strain ATCC BAA-98 / CGA009).